A 186-amino-acid chain; its full sequence is Elongation factor P (186 aa).

The protein belongs to the elongation factor P family.

The protein resides in the cytoplasm. It participates in protein biosynthesis; polypeptide chain elongation. Involved in peptide bond synthesis. Stimulates efficient translation and peptide-bond synthesis on native or reconstituted 70S ribosomes in vitro. Probably functions indirectly by altering the affinity of the ribosome for aminoacyl-tRNA, thus increasing their reactivity as acceptors for peptidyl transferase. The polypeptide is Elongation factor P (Clostridium acetobutylicum (strain ATCC 824 / DSM 792 / JCM 1419 / IAM 19013 / LMG 5710 / NBRC 13948 / NRRL B-527 / VKM B-1787 / 2291 / W)).